A 977-amino-acid polypeptide reads, in one-letter code: 2-oxoglutarate dehydrogenase E1 component (977 aa).

One can recognise an RPE1 insert domain in the interval 77–125 (VLNNRHLAKPAYREEFKGDTERSTAAYIDIREDASTGSTSKLPLEAKFG).

It belongs to the alpha-ketoglutarate dehydrogenase family. Homodimer. Part of the 2-oxoglutarate dehydrogenase (OGDH) complex composed of E1 (2-oxoglutarate dehydrogenase), E2 (dihydrolipoamide succinyltransferase) and E3 (dihydrolipoamide dehydrogenase); the complex contains multiple copies of the three enzymatic components (E1, E2 and E3). It depends on thiamine diphosphate as a cofactor.

It catalyses the reaction N(6)-[(R)-lipoyl]-L-lysyl-[protein] + 2-oxoglutarate + H(+) = N(6)-[(R)-S(8)-succinyldihydrolipoyl]-L-lysyl-[protein] + CO2. Functionally, E1 component of the 2-oxoglutarate dehydrogenase (OGDH) complex which catalyzes the decarboxylation of 2-oxoglutarate, the first step in the conversion of 2-oxoglutarate to succinyl-CoA and CO(2). The chain is 2-oxoglutarate dehydrogenase E1 component (sucA) from Rickettsia felis (strain ATCC VR-1525 / URRWXCal2) (Rickettsia azadi).